Here is a 369-residue protein sequence, read N- to C-terminus: Anhydro-N-acetylmuramic acid kinase (369 aa).

12 to 19 is an ATP binding site; that stretch reads GTSMDGVD.

This sequence belongs to the anhydro-N-acetylmuramic acid kinase family.

It carries out the reaction 1,6-anhydro-N-acetyl-beta-muramate + ATP + H2O = N-acetyl-D-muramate 6-phosphate + ADP + H(+). It participates in amino-sugar metabolism; 1,6-anhydro-N-acetylmuramate degradation. Its pathway is cell wall biogenesis; peptidoglycan recycling. In terms of biological role, catalyzes the specific phosphorylation of 1,6-anhydro-N-acetylmuramic acid (anhMurNAc) with the simultaneous cleavage of the 1,6-anhydro ring, generating MurNAc-6-P. Is required for the utilization of anhMurNAc either imported from the medium or derived from its own cell wall murein, and thus plays a role in cell wall recycling. The sequence is that of Anhydro-N-acetylmuramic acid kinase from Shewanella sp. (strain W3-18-1).